A 462-amino-acid polypeptide reads, in one-letter code: ATP synthase subunit beta (462 aa).

151 to 158 (GGAGVGKT) contacts ATP.

Belongs to the ATPase alpha/beta chains family. As to quaternary structure, F-type ATPases have 2 components, CF(1) - the catalytic core - and CF(0) - the membrane proton channel. CF(1) has five subunits: alpha(3), beta(3), gamma(1), delta(1), epsilon(1). CF(0) has four main subunits: a(1), b(1), b'(1) and c(9-12).

The protein resides in the cell inner membrane. The enzyme catalyses ATP + H2O + 4 H(+)(in) = ADP + phosphate + 5 H(+)(out). In terms of biological role, produces ATP from ADP in the presence of a proton gradient across the membrane. The catalytic sites are hosted primarily by the beta subunits. The protein is ATP synthase subunit beta of Chlorobium phaeobacteroides (strain DSM 266 / SMG 266 / 2430).